The following is a 97-amino-acid chain: Co-chaperonin GroES (97 aa).

Belongs to the GroES chaperonin family. Heptamer of 7 subunits arranged in a ring. Interacts with the chaperonin GroEL.

Its subcellular location is the cytoplasm. In terms of biological role, together with the chaperonin GroEL, plays an essential role in assisting protein folding. The GroEL-GroES system forms a nano-cage that allows encapsulation of the non-native substrate proteins and provides a physical environment optimized to promote and accelerate protein folding. GroES binds to the apical surface of the GroEL ring, thereby capping the opening of the GroEL channel. The chain is Co-chaperonin GroES from Aeromonas salmonicida (strain A449).